The following is a 432-amino-acid chain: Sensor histidine kinase YrkQ (432 aa).

Over 1–12 (MAHLKFTLTKKL) the chain is Cytoplasmic. A helical transmembrane segment spans residues 13–33 (ALLIMVAAIVSGVIFLTLQKI). Residues 34-145 (TDDLIEGYLS…GFYSSRYYDL (112 aa)) lie on the Extracellular side of the membrane. Residues 146-166 (AFALDLLGATLIFLIIVLFGI) form a helical membrane-spanning segment. The HAMP domain occupies 167 to 219 (RQSLRYLKTIHQEIHILEGGELDYEMTIKGHDELAMIAKSIEDLRKAFLDKLK). The Cytoplasmic segment spans residues 167–432 (RQSLRYLKTI…IVLRFWNTKM (266 aa)). The 199-residue stretch at 234 to 432 (EMSHDMRTPL…IVLRFWNTKM (199 aa)) folds into the Histidine kinase domain. Phosphohistidine; by autocatalysis is present on histidine 237.

The protein localises to the cell membrane. It carries out the reaction ATP + protein L-histidine = ADP + protein N-phospho-L-histidine.. Member of the two-component regulatory system YrkQ/YrkP. Probably activates YrkP by phosphorylation. This chain is Sensor histidine kinase YrkQ (yrkQ), found in Bacillus subtilis (strain 168).